The sequence spans 304 residues: Elongation factor Ts (304 aa).

Residues 82-85 form an involved in Mg(2+) ion dislocation from EF-Tu region; the sequence is TDFV.

This sequence belongs to the EF-Ts family.

It is found in the cytoplasm. Associates with the EF-Tu.GDP complex and induces the exchange of GDP to GTP. It remains bound to the aminoacyl-tRNA.EF-Tu.GTP complex up to the GTP hydrolysis stage on the ribosome. The chain is Elongation factor Ts from Symbiobacterium thermophilum (strain DSM 24528 / JCM 14929 / IAM 14863 / T).